A 712-amino-acid polypeptide reads, in one-letter code: Rap1 GTPase-activating protein 2 (712 aa).

Positions 1 to 33 (MLAGLKVKKQELANSSDVTLPDRPLSPPLTAPP) are disordered. A Phosphoserine modification is found at Ser26. Thr30 carries the post-translational modification Phosphothreonine. One can recognise a Rap-GAP domain in the interval 229 to 445 (IVSYDEHDVN…RTRAALLDNL (217 aa)). 7 positions are modified to phosphoserine: Ser488, Ser495, Ser525, Ser539, Ser545, Ser593, and Ser594. The interval 529-712 (AAATAKNQSR…LSHASSSAGH (184 aa)) is disordered. Over residues 566–594 (DSASSTPKTPDGGHSSQEIKSETSSNPSS) the composition is skewed to polar residues. Residues 599–612 (PNKEKPFIKLKENG) show a composition bias toward basic and acidic residues. The span at 617–629 (SRSSSSTSSFSST) shows a compositional bias: low complexity. Polar residues predominate over residues 641–652 (SGSSQPSTTSPF). Residues 660 to 669 (SPSPSSESPS) show a composition bias toward low complexity. Polar residues predominate over residues 681–694 (RSPTDAKSRNSPRS).

It localises to the cytoplasm. GTPase activator for the nuclear Ras-related regulatory protein RAP-1A (KREV-1), converting it to the putatively inactive GDP-bound state. This Mus musculus (Mouse) protein is Rap1 GTPase-activating protein 2 (Rap1gap2).